Here is a 73-residue protein sequence, read N- to C-terminus: Serine rich endogenous peptide 14 (73 aa).

Residues 1–31 (MAAKTSNLVALLLSLFLLLLSISSQVGLGEA) form the signal peptide. The tract at residues 44–73 (VSHPSPPPPHRSMAPPIFVPPSTSHKGQGP) is disordered. The SCOOP motif motif lies at 59–73 (PIFVPPSTSHKGQGP). Over residues 64 to 73 (PSTSHKGQGP) the composition is skewed to polar residues. Residues 65–67 (STS) carry the SxS motif essential for MIK2 binding motif.

This sequence belongs to the serine rich endogenous peptide (SCOOP) phytocytokine family. As to quaternary structure, interacts with MIK2 (via extracellular leucine-rich repeat domain); this interaction triggers the formation of complex between MIK2 and the BAK1/SERK3 and SERK4 coreceptors, and subsequent BAK1 activation by phosphorylation. Mostly expressed in seedlings shoots and leaves, and, to a lower extent, in roots, stems, siliques, seeds and flowers.

The protein localises to the cell membrane. It localises to the secreted. The protein resides in the extracellular space. It is found in the apoplast. In terms of biological role, brassicaceae-specific phytocytokine (plant endogenous peptide released into the apoplast) perceived by MIK2 in a BAK1/SERK3 and SERK4 coreceptors-dependent manner, that modulates various physiological and antimicrobial processes including growth prevention and reactive oxygen species (ROS) response regulation. Inhibits root growth and regulates root meristems. Prevents general growth and development. Exhibits antibacterial effects against Pseudomonas syringae pv. tomato DC3000, Ralstonia solanacearum, Bacillus subtilis and Agrobacterium tumefaciens, thus being an antimicrobial peptide (AMP). The sequence is that of Serine rich endogenous peptide 14 from Arabidopsis thaliana (Mouse-ear cress).